A 202-amino-acid polypeptide reads, in one-letter code: Ribonuclease HII (202 aa).

In terms of domain architecture, RNase H type-2 spans 12-201 (LLIAGVDEAG…VRQLKLFIPE (190 aa)). A divalent metal cation contacts are provided by Asp18, Glu19, and Asp110.

Belongs to the RNase HII family. The cofactor is Mn(2+). Mg(2+) is required as a cofactor.

It localises to the cytoplasm. The enzyme catalyses Endonucleolytic cleavage to 5'-phosphomonoester.. In terms of biological role, endonuclease that specifically degrades the RNA of RNA-DNA hybrids. This chain is Ribonuclease HII, found in Coxiella burnetii (strain CbuG_Q212) (Coxiella burnetii (strain Q212)).